A 242-amino-acid chain; its full sequence is Probable 2-phosphosulfolactate phosphatase (242 aa).

The protein belongs to the ComB family. Mg(2+) serves as cofactor.

The enzyme catalyses (2R)-O-phospho-3-sulfolactate + H2O = (2R)-3-sulfolactate + phosphate. This chain is Probable 2-phosphosulfolactate phosphatase, found in Synechococcus sp. (strain JA-2-3B'a(2-13)) (Cyanobacteria bacterium Yellowstone B-Prime).